The sequence spans 590 residues: AT-rich interactive domain-containing protein 5A (590 aa).

Positions 1–52 are disordered; sequence MAAPPAKGNTEQSEEGDLPQLPVSPKPDDEQSRSQSPTQLQDSPEAGGEQEE. The interval 1–294 is interaction with SOX9; it reads MAAPPAKGNT…NKDIQDSPQN (294 aa). At serine 24 the chain carries Phosphoserine. Polar residues predominate over residues 33–42; that stretch reads RSQSPTQLQD. The 93-residue stretch at 50-142 folds into the ARID domain; sequence QEEEQAFLVS…LVLPYVRHLK (93 aa). Residues lysine 80 and lysine 89 each participate in a glycyl lysine isopeptide (Lys-Gly) (interchain with G-Cter in ubiquitin) cross-link. The segment at 141 to 229 is disordered; the sequence is LKGEDDKPLP…SGPSPPLTGA (89 aa). Positions 160-186 are enriched in basic and acidic residues; sequence MAKELRGDDGTTEKLKKAKDSEERRVE. Polar residues predominate over residues 187–210; that stretch reads QTTPGKTKSDATGQTQLPCQGSSR. A phosphoserine mark is found at serine 253 and serine 283. Disordered regions lie at residues 275-323, 367-402, and 419-443; these read EGCR…RMEA, GPPGKEEGPTTKESHLVWGGDANHPSAFHKGSTRKR, and VPTERPGAPSPHPSSPGLGSKRGLE. Over residues 367–381 the composition is skewed to basic and acidic residues; it reads GPPGKEEGPTTKESH. Phosphoserine is present on residues serine 433 and serine 458.

Interacts with SOX9. Interacts with ESR1. Interacts with RORC. In terms of processing, phosphorylated by MAPK14 on serine residues involving a TLR4 signaling pathway upon lipopolysaccharide (LPS) stimulation leading to its ubiquitination and proteasomal degradation. Ubiquitinated leading to proteasomal degradation; involving WWP1 linked to MAPK14-mediated phosphorylation upon LPS stimulation. In terms of tissue distribution, expressed in T cells (at protein level). Expressed at high levels in cartilage, heart, testis and bone.

It is found in the nucleus. Functionally, DNA-binding protein that may regulate transcription and act as a repressor by binding to AT-rich stretches in the promoter region of target genes. May positively regulate chondrocyte-specific transcription such as of COL2A1 in collaboration with SOX9 and positively regulate histone H3 acetylation at chondrocyte-specific genes. May stimulate early-stage chondrocyte differentiation and inhibit later stage differention. Can repress ESR1-mediated transcriptional activation; proposed to act as corepressor for selective nuclear hormone receptors. As an RNA-binding protein, involved in the regulation of inflammatory response by stabilizing selective inflammation-related mRNAs, such as STAT3 and TBX21. Also stabilizes IL6 mRNA. Binds to stem loop structures located in the 3'UTRs of IL6, STAT3 and TBX21 mRNAs; at least for STAT3 prevents binding of ZC3H12A to the mRNA stem loop structure thus inhibiting its degradation activity. Contributes to elevated IL6 levels possibly implicated in autoimmunity processes. IL6-dependent stabilization of STAT3 mRNA may promote differentiation of naive CD4+ T-cells into T-helper Th17 cells. In CD4+ T-cells may also inhibit RORC-induced Th17 cell differentiation independently of IL6 signaling. Stabilization of TBX21 mRNA contributes to elevated interferon-gamma secretion in Th1 cells possibly implicated in the establishment of septic shock. Stabilizes TNFRSF4/OX40 mRNA by binding to the conserved stem loop structure in its 3'UTR; thereby competing with the mRNA-destabilizing functions of RC3H1 and endoribonuclease ZC3H12A. The protein is AT-rich interactive domain-containing protein 5A (Arid5a) of Mus musculus (Mouse).